Here is a 149-residue protein sequence, read N- to C-terminus: Probable glycine-rich RNA-binding protein 1 (149 aa).

Residues 8–83 (YRCFVGGLAW…LDGRNITAQA (76 aa)) form the RRM domain. The tract at residues 80–149 (TAQARGSGTR…GRSEGGSWRN (70 aa)) is disordered. Composition is skewed to gly residues over residues 87 to 101 (GTRGGMVGGYGSGGY), 110 to 123 (YNRGGGGGYGGGYG), and 131 to 143 (YGDGGYGGQGRSE).

The protein belongs to the GR-RBP family.

Its function is as follows. Possibly has a role in RNA transcription or processing during stress. This chain is Probable glycine-rich RNA-binding protein 1 (RBG1), found in Arabidopsis thaliana (Mouse-ear cress).